The primary structure comprises 143 residues: Transcriptional regulator MraZ (143 aa).

2 consecutive SpoVT-AbrB domains span residues 5–47 (EYQH…PLTE) and 76–119 (AMEG…AKER).

The protein belongs to the MraZ family. In terms of assembly, forms oligomers.

Its subcellular location is the cytoplasm. The protein resides in the nucleoid. The protein is Transcriptional regulator MraZ of Lactobacillus delbrueckii subsp. bulgaricus (strain ATCC 11842 / DSM 20081 / BCRC 10696 / JCM 1002 / NBRC 13953 / NCIMB 11778 / NCTC 12712 / WDCM 00102 / Lb 14).